A 141-amino-acid chain; its full sequence is MFANVGWGEMLVLVIAGLVILGPERLPGAIRWTAGAVRQARDYITGATSQLREDLGPEFDDLREPLSELQKLRGMTPRAALTKHLLDGDDSIFTGRFDSTSSDQPGSGKPPKPQSGPGPAAASGPAATTTPASTPFDPDAT.

Residues 2–22 form a helical membrane-spanning segment; that stretch reads FANVGWGEMLVLVIAGLVILG. The segment at 92–141 is disordered; that stretch reads IFTGRFDSTSSDQPGSGKPPKPQSGPGPAAASGPAATTTPASTPFDPDAT. Residues 117 to 141 are compositionally biased toward low complexity; the sequence is PGPAAASGPAATTTPASTPFDPDAT.

The protein belongs to the TatB family. As to quaternary structure, the Tat system comprises two distinct complexes: a TatABC complex, containing multiple copies of TatA, TatB and TatC subunits, and a separate TatA complex, containing only TatA subunits. Substrates initially bind to the TatABC complex, which probably triggers association of the separate TatA complex to form the active translocon.

It is found in the cell membrane. Its function is as follows. Part of the twin-arginine translocation (Tat) system that transports large folded proteins containing a characteristic twin-arginine motif in their signal peptide across membranes. Together with TatC, TatB is part of a receptor directly interacting with Tat signal peptides. TatB may form an oligomeric binding site that transiently accommodates folded Tat precursor proteins before their translocation. The protein is Sec-independent protein translocase protein TatB of Mycolicibacterium gilvum (strain PYR-GCK) (Mycobacterium gilvum (strain PYR-GCK)).